The primary structure comprises 793 residues: Plakophilin-3 (793 aa).

Positions Gln56–Ala82 are disordered. A compositionally biased stretch (low complexity) spans Pro66 to Ala82. Omega-N-methylarginine is present on Arg81. Ser122, Ser179, and Ser182 each carry phosphoserine. Position 194 is a phosphotyrosine (Tyr194). A disordered region spans residues Ser221–Arg240. At Ser239 the chain carries Phosphoserine. At Thr249 the chain carries Phosphothreonine. The residue at position 260 (Arg260) is an Omega-N-methylarginine. Phosphoserine occurs at positions 282, 310, 311, and 328. Positions Ser282–Leu285 are required for interaction with SFN. The required for interaction with GSK3B stretch occupies residues Leu291–Val720. 8 ARM repeats span residues Gly302–Tyr345, Ala348–Tyr387, Ala390–Ser429, Thr446–Ser484, Ala488–Tyr533, Pro592–Ala633, Val641–Arg680, and Lys685–Val726. The tract at residues Val513 to Pro793 is required for binding to PKP2 mRNA.

The protein belongs to the beta-catenin family. Found in a complex composed of CDH1, RAP1A and PKP3; PKP3 acts as a scaffold protein within the complex, the complex is required for CDH1 localization to mature desmosome cell junctions. Interacts with FXR1; the interaction facilitates the binding of PKP3 to PKP2 mRNA. Interacts (via ARM repeats) with GSK3B; the interaction may be involved in PKP3 protein degradation. Interacts with hyperphosphorylated and hypophosphorylated RB1; the interaction inhibits RB1 interaction with and repression of the transcription factor E2F1, potentially via sequestering RB1 to the cytoplasm. Interacts with CDKN1A; the interaction sequesters CDKN1A to the cytoplasm thereby repressing its role as an inhibitor of CDK4- and CDK6-driven RB1 phosphorylation. Interacts (via N-terminus) with SFN; the interaction maintains the cytoplasmic pool of PKP3, facilitates PKP3 exchange at desmosomes and restricts PKP3 localization to existing desmosome cell junctions. Interacts (via N-terminus) with SFN; the interaction maintains the cytoplasmic pool of PKP3 and restricts PKP3 localization to existing desmosome cell junctions. Interacts (via N-terminus) with JUP; the interaction is required for PKP3 localization to desmosome cell-cell junctions. Phosphorylated at Ser-282 when localized to the cytoplasm, PKP3 at desmosome cell junctions is not phosphorylated. Phosphorylation at Try-194 by SRC is induced by reactive oxygen species and potentially acts as a release mechanism from desmosome cell-cell junctions.

Its subcellular location is the nucleus. It is found in the cell junction. It localises to the desmosome. The protein resides in the cytoplasm. The protein localises to the cell membrane. Its subcellular location is the adherens junction. Functionally, a component of desmosome cell-cell junctions which are required for positive regulation of cellular adhesion. Required for the localization of DSG2, DSP and PKP2 to mature desmosome junctions. May also play a role in the maintenance of DSG3 protein abundance in keratinocytes. Required for the formation of DSP-containing desmosome precursors in the cytoplasm during desmosome assembly. Also regulates the accumulation of CDH1 to mature desmosome junctions, via cAMP-dependent signaling and its interaction with activated RAP1A. Positively regulates the stabilization of PKP2 mRNA and therefore protein abundance, via its interaction with FXR1, may also regulate the protein abundance of DSP via the same mechanism. May also regulate the protein abundance of the desmosome component PKP1. Required for the organization of desmosome junctions at intercellular borders between basal keratinocytes of the epidermis, as a result plays a role in maintenance of the dermal barrier and regulation of the dermal inflammatory response. Required during epidermal keratinocyte differentiation for cell adherence at tricellular cell-cell contacts, via regulation of the timely formation of adherens junctions and desmosomes in a calcium-dependent manner, and may also play a role in the organization of the intracellular actin fiber belt. Acts as a negative regulator of the inflammatory response in hematopoietic cells of the skin and intestine, via modulation of proinflammatory cytokine production. Important for epithelial barrier maintenance in the intestine to reduce intestinal permeability, thereby plays a role in protection from intestinal-derived endotoxemia. Required for the development of hair follicles, via a role in the regulation of inner root sheaf length, correct alignment and anterior-posterior polarity of hair follicles. Promotes proliferation and cell-cycle G1/S phase transition of keratinocytes. Promotes E2F1-driven transcription of G1/S phase promoting genes by acting to release E2F1 from its inhibitory interaction with RB1, via sequestering RB1 and CDKN1A to the cytoplasm and thereby increasing CDK4- and CDK6-driven phosphorylation of RB1. May act as a scaffold protein to facilitate MAPK phosphorylation of RPS6KA protein family members and subsequently promote downstream EGFR signaling. May play a role in the positive regulation of transcription of Wnt-mediated TCF-responsive target genes. This is Plakophilin-3 (PKP3) from Bos taurus (Bovine).